The following is a 370-amino-acid chain: MSIDFQIDKPKSAQRIVVAMSGGVDSSVVAALAKATGAETIGITLQLYDHGAAVGRKGSCCAGKDIRDARAVAEKIGIPHYVFDYENNFKESVIDDFVSEYVAGRTPVPCIRCNQGVKFTDLLNVARELGADCLATGHYVRRLVNNDRVEMHRALDPARDQSYFLFATTKEQLDYLRFPLGGLPKPKVREMAAELGLSVAMKADSQDICFVPDGDYARIVEEKCPESGQGGDIVDMQGRVLGKHSGLIHFTVGQRRGLEIGGQKEPLYVIRLDPAKKQLVVGPRQALAVAKAEIKEVNWLVDGFDREMQVKIRSAAKPVSARFDGKELVFEKPEYGVSPGQAAVFYDGDQVLGGGWIKETTPAVFDDLAE.

ATP-binding positions include 19–26 and L45; that span reads AMSGGVDS. C113 acts as the Nucleophile in catalysis. A disulfide bond links C113 and C209. An ATP-binding site is contributed by G137. An interaction with tRNA region spans residues 159–161; sequence RDQ. Residue C209 is the Cysteine persulfide intermediate of the active site.

It belongs to the MnmA/TRMU family.

The protein localises to the cytoplasm. It carries out the reaction S-sulfanyl-L-cysteinyl-[protein] + uridine(34) in tRNA + AH2 + ATP = 2-thiouridine(34) in tRNA + L-cysteinyl-[protein] + A + AMP + diphosphate + H(+). Its function is as follows. Catalyzes the 2-thiolation of uridine at the wobble position (U34) of tRNA, leading to the formation of s(2)U34. This is tRNA-specific 2-thiouridylase MnmA from Zymomonas mobilis subsp. mobilis (strain ATCC 31821 / ZM4 / CP4).